The following is a 184-amino-acid chain: MSLRSEHIWIELIKGSRKISNFCWAFILFVGSVGFLLVGISSYLGRNLISFFPSQQIVFFPQGIVMSFYGIAGLFISSYLWCTISWNVGNGYDRFDRKEGIVCIFRWGFPGKNRRIFLRFLIKDIQSIRIEVKEGIFARRVLYMEIRGQGTIPLTRTDENLTPREIEQKAAELAYFLRVPIEVF.

The next 2 membrane-spanning stretches (helical) occupy residues F22 to S42 and I57 to S77.

The protein belongs to the Ycf4 family.

It localises to the plastid. The protein resides in the chloroplast thylakoid membrane. In terms of biological role, seems to be required for the assembly of the photosystem I complex. The sequence is that of Photosystem I assembly protein Ycf4 from Coffea arabica (Arabian coffee).